Reading from the N-terminus, the 469-residue chain is Serine hydroxymethyltransferase, cytosolic (469 aa).

An N6-(pyridoxal phosphate)lysine modification is found at Lys248.

It belongs to the SHMT family. In terms of assembly, homotetramer. Pyridoxal 5'-phosphate serves as cofactor.

Its subcellular location is the cytoplasm. The catalysed reaction is (6R)-5,10-methylene-5,6,7,8-tetrahydrofolate + glycine + H2O = (6S)-5,6,7,8-tetrahydrofolate + L-serine. It participates in one-carbon metabolism; tetrahydrofolate interconversion. In terms of biological role, interconversion of serine and glycine. This chain is Serine hydroxymethyltransferase, cytosolic (SHM2), found in Eremothecium gossypii (strain ATCC 10895 / CBS 109.51 / FGSC 9923 / NRRL Y-1056) (Yeast).